The following is a 330-amino-acid chain: Glycerol-3-phosphate dehydrogenase [NAD(P)+] (330 aa).

Positions 13, 33, and 103 each coordinate NADPH. The sn-glycerol 3-phosphate site is built by Lys103, Gly131, and Thr133. An NADPH-binding site is contributed by Ala135. Sn-glycerol 3-phosphate-binding residues include Lys186, Asp239, Ser249, Arg250, and Asn251. The active-site Proton acceptor is Lys186. Residue Arg250 coordinates NADPH. Positions 274 and 276 each coordinate NADPH.

This sequence belongs to the NAD-dependent glycerol-3-phosphate dehydrogenase family.

The protein localises to the cytoplasm. It carries out the reaction sn-glycerol 3-phosphate + NAD(+) = dihydroxyacetone phosphate + NADH + H(+). The catalysed reaction is sn-glycerol 3-phosphate + NADP(+) = dihydroxyacetone phosphate + NADPH + H(+). It participates in membrane lipid metabolism; glycerophospholipid metabolism. Catalyzes the reduction of the glycolytic intermediate dihydroxyacetone phosphate (DHAP) to sn-glycerol 3-phosphate (G3P), the key precursor for phospholipid synthesis. This Erythrobacter litoralis (strain HTCC2594) protein is Glycerol-3-phosphate dehydrogenase [NAD(P)+].